A 314-amino-acid polypeptide reads, in one-letter code: Putative gluconeogenesis factor (314 aa).

It belongs to the gluconeogenesis factor family.

Its subcellular location is the cytoplasm. In terms of biological role, required for morphogenesis under gluconeogenic growth conditions. The sequence is that of Putative gluconeogenesis factor from Thermotoga maritima (strain ATCC 43589 / DSM 3109 / JCM 10099 / NBRC 100826 / MSB8).